The following is a 324-amino-acid chain: Lignin-forming anionic peroxidase (324 aa).

The first 22 residues, 1–22, serve as a signal peptide directing secretion; sequence MSFLRFVGAILFLVAIFGASNA. Gln-23 carries the pyrrolidone carboxylic acid modification. 4 disulfides stabilise this stretch: Cys-33-Cys-111, Cys-66-Cys-71, Cys-117-Cys-320, and Cys-196-Cys-228. N-linked (GlcNAc...) asparagine glycosylation occurs at Asn-35. His-64 functions as the Proton acceptor in the catalytic mechanism. 5 residues coordinate Ca(2+): Asp-65, Val-68, Gly-70, Asp-72, and Ser-74. Asn-150 is a glycosylation site (N-linked (GlcNAc...) asparagine). Substrate is bound at residue Pro-159. Residue His-189 coordinates heme b. Thr-190 provides a ligand contact to Ca(2+). Residue Asn-207 is glycosylated (N-linked (GlcNAc...) asparagine). Asp-242, Thr-245, and Asp-250 together coordinate Ca(2+).

The protein belongs to the peroxidase family. Classical plant (class III) peroxidase subfamily. Requires Ca(2+) as cofactor. Heme b is required as a cofactor.

It is found in the secreted. The enzyme catalyses 2 a phenolic donor + H2O2 = 2 a phenolic radical donor + 2 H2O. Removal of H(2)O(2), oxidation of toxic reductants, biosynthesis and degradation of lignin, suberization, auxin catabolism, response to environmental stresses such as wounding, pathogen attack and oxidative stress. These functions might be dependent on each isozyme/isoform in each plant tissue. In terms of biological role, plays an integral role in secondary cell wall biosynthesis by the polymerization of cinnamyl alcohols into lignin and by forming rigid cross-links between cellulose, pectin, hydroxy-proline-rich glycoproteins, and lignin. The protein is Lignin-forming anionic peroxidase of Nicotiana tabacum (Common tobacco).